A 63-amino-acid chain; its full sequence is uncharacterized protein (63 aa).

This is an uncharacterized protein from Dictyostelium discoideum (Social amoeba).